Reading from the N-terminus, the 125-residue chain is Large ribosomal subunit protein bL12 (125 aa).

This sequence belongs to the bacterial ribosomal protein bL12 family. Homodimer. Part of the ribosomal stalk of the 50S ribosomal subunit. Forms a multimeric L10(L12)X complex, where L10 forms an elongated spine to which 2 to 4 L12 dimers bind in a sequential fashion. Binds GTP-bound translation factors.

In terms of biological role, forms part of the ribosomal stalk which helps the ribosome interact with GTP-bound translation factors. Is thus essential for accurate translation. The sequence is that of Large ribosomal subunit protein bL12 from Caldanaerobacter subterraneus subsp. tengcongensis (strain DSM 15242 / JCM 11007 / NBRC 100824 / MB4) (Thermoanaerobacter tengcongensis).